Consider the following 439-residue polypeptide: Proline--tRNA ligase (439 aa).

It belongs to the class-II aminoacyl-tRNA synthetase family. ProS type 2 subfamily. Homodimer.

The protein resides in the cytoplasm. The enzyme catalyses tRNA(Pro) + L-proline + ATP = L-prolyl-tRNA(Pro) + AMP + diphosphate. In terms of biological role, catalyzes the attachment of proline to tRNA(Pro) in a two-step reaction: proline is first activated by ATP to form Pro-AMP and then transferred to the acceptor end of tRNA(Pro). This Beijerinckia indica subsp. indica (strain ATCC 9039 / DSM 1715 / NCIMB 8712) protein is Proline--tRNA ligase.